Consider the following 259-residue polypeptide: Protein LEAD-SENSITIVE 1 (259 aa).

One can recognise an LRAT domain in the interval 20-168; sequence YSWRTAYIYA…CKTALLVLEG (149 aa). Residues H30 and H42 contribute to the active site. The active-site Acyl-thioester intermediate is C152.

In terms of tissue distribution, highly expressed in inflorescences, siliques and stems, and, to a lower extent, in roots and leaves.

The protein localises to the cytoplasm. Its function is as follows. Confers tolerance to lead ions (Pb) stress mediated by Pb(NO(3))(2) probably by promoting Pb accumulation leading to subsequent glutathione-dependent phytochelatin (PC) synthesis and related gene expression, including PDR12/ABCG40, GSH1, GSH2, GR1, GR2, PCS1 and PCS2. This Arabidopsis thaliana (Mouse-ear cress) protein is Protein LEAD-SENSITIVE 1.